Reading from the N-terminus, the 201-residue chain is ATP-dependent Clp protease proteolytic subunit (201 aa).

S100 functions as the Nucleophile in the catalytic mechanism. Residue H125 is part of the active site.

Belongs to the peptidase S14 family. As to quaternary structure, component of the chloroplastic Clp protease core complex.

It is found in the plastid. Its subcellular location is the chloroplast stroma. The enzyme catalyses Hydrolysis of proteins to small peptides in the presence of ATP and magnesium. alpha-casein is the usual test substrate. In the absence of ATP, only oligopeptides shorter than five residues are hydrolyzed (such as succinyl-Leu-Tyr-|-NHMec, and Leu-Tyr-Leu-|-Tyr-Trp, in which cleavage of the -Tyr-|-Leu- and -Tyr-|-Trp bonds also occurs).. Cleaves peptides in various proteins in a process that requires ATP hydrolysis. Has a chymotrypsin-like activity. Plays a major role in the degradation of misfolded proteins. This is ATP-dependent Clp protease proteolytic subunit from Ranunculus macranthus (Large buttercup).